A 428-amino-acid polypeptide reads, in one-letter code: MFVDQVKIYVKGGDGGNGMVAYRREKYVPKGGPAGGDGGKGADVVFVVEEGLRTLMDFRYQRHFKADRGQHGMSKGQHGRKAEDLIVKVPPGTVVKDEKTGQILADLVTHGQSAVIARGGRGGRGNSRFATPTNPAPEIAENGEPGQERDVILELKVLADVGLVGFPSVGKSTLLSVVSSARPKIAEYHFTTIVPNLGVVETGDNRSFVMADLPGLIEGAHAGVGLGHQFLRHIERTRVIVHVIDMSGLEGRDPYEDYVTINNELKEYNLRLTERPQVVVANKMDMPDAEENLQAFKEKVGDEVKIFPISAVTKQGVRDLLFEVANLLETTPEFPIHEVADESDTSVMYKLETEGVKFDITRESDGTFVISGYDIEKTFKMTDFSRDESVRRFARQMRGMGIDEALRARGAKDGDIVKILEYEFEFID.

One can recognise an Obg domain in the interval 1-158 (MFVDQVKIYV…RDVILELKVL (158 aa)). The segment at 117–145 (ARGGRGGRGNSRFATPTNPAPEIAENGEP) is disordered. In terms of domain architecture, OBG-type G spans 159–329 (ADVGLVGFPS…LLFEVANLLE (171 aa)). Residues 165-172 (GFPSVGKS), 190-194 (FTTIV), 212-215 (DLPG), 282-285 (NKMD), and 310-312 (SAV) each bind GTP. Positions 172 and 192 each coordinate Mg(2+). The 79-residue stretch at 350 to 428 (KLETEGVKFD…ILEYEFEFID (79 aa)) folds into the OCT domain.

This sequence belongs to the TRAFAC class OBG-HflX-like GTPase superfamily. OBG GTPase family. Monomer. Mg(2+) is required as a cofactor.

Its subcellular location is the cytoplasm. Its function is as follows. An essential GTPase which binds GTP, GDP and possibly (p)ppGpp with moderate affinity, with high nucleotide exchange rates and a fairly low GTP hydrolysis rate. Plays a role in control of the cell cycle, stress response, ribosome biogenesis and in those bacteria that undergo differentiation, in morphogenesis control. The sequence is that of GTPase Obg from Bacillus cereus (strain ATCC 10987 / NRS 248).